The primary structure comprises 367 residues: MSNLPIYNFIRKLPKCEHHVHLEGCLSPDLVFRLAKKNGITLPSDDAAYTTPSTLLASYEHFGCLDDFLRYYYIAVSVLIEASDFEALAYEYFSIAHSQGVHHAEVFFDPQTHTSRGISYDVVVSGFSAACERANRDFGMSTNLIMCFLRHLPSEAAHETFAEALKRNDFENGIVAGVGLDSSEVDFPPELFQEVYKLAAEKGIRRTGHAGEEGDPSYIRSGLDNLSLQRIDHGIRLVEDKELMKRVAEENIMLTMCPLSNLKLRCVNSIAELPVREFLEAGVPFSINCDDPAYFGGYTLENYFAIQKHFNLTVKEWVFIANAAINGSWISGKRKEELLSSVQKCVKEYTAEIQQPKTLETAVEVQA.

3 residues coordinate Zn(2+): His-19, His-21, and His-209. The active-site Proton donor is the Glu-212. Asp-290 contacts Zn(2+). Asp-291 lines the substrate pocket.

It belongs to the metallo-dependent hydrolases superfamily. Adenosine and AMP deaminases family. Adenine deaminase type 2 subfamily. It depends on Zn(2+) as a cofactor.

The protein resides in the cytoplasm. It is found in the nucleus. It carries out the reaction adenine + H2O + H(+) = hypoxanthine + NH4(+). In terms of biological role, catalyzes the hydrolytic deamination of adenine to hypoxanthine. Plays an important role in the purine salvage pathway and in nitrogen catabolism. Also exhibits a low activity towards N(6)-substituted adenines that are commonly known as the plant hormones cytokinins. This Schizosaccharomyces pombe (strain 972 / ATCC 24843) (Fission yeast) protein is Adenine deaminase.